Reading from the N-terminus, the 367-residue chain is GMP synthase [glutamine-hydrolyzing] subunit B (367 aa).

In terms of domain architecture, GMPS ATP-PPase spans 2 to 190 (FDPASFVEEI…LKLPKEISER (189 aa)). ATP is bound at residue 29 to 35 (SGGVDST).

In terms of assembly, heterodimer composed of a glutamine amidotransferase subunit (A) and a GMP-binding subunit (B).

It catalyses the reaction XMP + L-glutamine + ATP + H2O = GMP + L-glutamate + AMP + diphosphate + 2 H(+). Its pathway is purine metabolism; GMP biosynthesis; GMP from XMP (L-Gln route): step 1/1. Catalyzes the synthesis of GMP from XMP. This Saccharolobus solfataricus (strain ATCC 35092 / DSM 1617 / JCM 11322 / P2) (Sulfolobus solfataricus) protein is GMP synthase [glutamine-hydrolyzing] subunit B (guaAB).